We begin with the raw amino-acid sequence, 78 residues long: Translation initiation factor IF-1, plastid (78 aa).

Positions 1-72 (MKKQDLIDME…TKGRITYRLR (72 aa)) constitute an S1-like domain.

Belongs to the IF-1 family. In terms of assembly, component of the 30S ribosomal translation pre-initiation complex which assembles on the 30S ribosome in the order IF-2 and IF-3, IF-1 and N-formylmethionyl-tRNA(fMet); mRNA recruitment can occur at any time during PIC assembly.

It localises to the plastid. In terms of biological role, one of the essential components for the initiation of protein synthesis. Stabilizes the binding of IF-2 and IF-3 on the 30S subunit to which N-formylmethionyl-tRNA(fMet) subsequently binds. Helps modulate mRNA selection, yielding the 30S pre-initiation complex (PIC). Upon addition of the 50S ribosomal subunit IF-1, IF-2 and IF-3 are released leaving the mature 70S translation initiation complex. This Aneura mirabilis (Parasitic liverwort) protein is Translation initiation factor IF-1, plastid.